A 341-amino-acid chain; its full sequence is HTH-type transcriptional repressor PurR (341 aa).

In terms of domain architecture, HTH lacI-type spans 2–56; sequence ATIKDVAKRANVSTTTVSHVINKTRFVAEETRNAVWAAIKELHYSPSAVARSLKV. The H-T-H motif DNA-binding region spans 4-23; that stretch reads IKDVAKRANVSTTTVSHVIN. The DNA-binding element occupies 48-56; sequence SAVARSLKV. Residues Tyr-73, Arg-190, Thr-192, Phe-221, and Asp-275 each coordinate hypoxanthine.

As to quaternary structure, homodimer.

It participates in purine metabolism; purine nucleotide biosynthesis [regulation]. In terms of biological role, is the main repressor of the genes involved in the de novo synthesis of purine nucleotides, regulating purB, purC, purEK, purF, purHD, purL, purMN and guaBA expression. PurR is allosterically activated to bind its cognate DNA by binding the purine corepressors, hypoxanthine or guanine, thereby effecting transcription repression. This is HTH-type transcriptional repressor PurR from Klebsiella pneumoniae (strain 342).